A 201-amino-acid polypeptide reads, in one-letter code: Probable nicotinate-nucleotide adenylyltransferase (201 aa).

The protein belongs to the NadD family.

The enzyme catalyses nicotinate beta-D-ribonucleotide + ATP + H(+) = deamido-NAD(+) + diphosphate. The protein operates within cofactor biosynthesis; NAD(+) biosynthesis; deamido-NAD(+) from nicotinate D-ribonucleotide: step 1/1. Functionally, catalyzes the reversible adenylation of nicotinate mononucleotide (NaMN) to nicotinic acid adenine dinucleotide (NaAD). The chain is Probable nicotinate-nucleotide adenylyltransferase from Clostridium botulinum (strain Kyoto / Type A2).